A 483-amino-acid chain; its full sequence is Bifunctional pantoate ligase/cytidylate kinase (483 aa).

Positions 1–246 are pantoate--beta-alanine ligase; the sequence is MPTMGALHAG…CGSTRLIDHA (246 aa). 4–11 contacts ATP; sequence MGALHAGH. H11 acts as the Proton donor in catalysis. Q34 serves as a coordination point for (R)-pantoate. Beta-alanine is bound at residue Q34. 124–127 lines the ATP pocket; sequence GEKD. Residue Q130 coordinates (R)-pantoate. ATP-binding positions include V153 and 161 to 164; that span reads LSSR. A cytidylate kinase region spans residues 247-483; it reads FLMTRQPLVA…AEEAWPTPQR (237 aa).

It in the N-terminal section; belongs to the pantothenate synthetase family. In the C-terminal section; belongs to the cytidylate kinase family. Type 1 subfamily.

The protein resides in the cytoplasm. It catalyses the reaction (R)-pantoate + beta-alanine + ATP = (R)-pantothenate + AMP + diphosphate + H(+). The catalysed reaction is CMP + ATP = CDP + ADP. It carries out the reaction dCMP + ATP = dCDP + ADP. It functions in the pathway cofactor biosynthesis; (R)-pantothenate biosynthesis; (R)-pantothenate from (R)-pantoate and beta-alanine: step 1/1. Functionally, catalyzes the condensation of pantoate with beta-alanine in an ATP-dependent reaction via a pantoyl-adenylate intermediate. In terms of biological role, catalyzes the transfer of a phosphate group from ATP to either CMP or dCMP to form CDP or dCDP and ADP, respectively. The polypeptide is Bifunctional pantoate ligase/cytidylate kinase (Synechococcus sp. (strain CC9902)).